The sequence spans 341 residues: Geranylfarnesyl diphosphate synthase (341 aa).

Positions 47, 50, and 95 each coordinate isopentenyl diphosphate. Mg(2+) is bound by residues aspartate 102 and aspartate 106. Position 111 (arginine 111) interacts with an all-trans-polyprenyl diphosphate. Residue arginine 112 participates in isopentenyl diphosphate binding. Residues lysine 193, threonine 194, and glutamine 231 each contribute to the an all-trans-polyprenyl diphosphate site.

The protein belongs to the FPP/GGPP synthase family. Homodimer. Requires Mg(2+) as cofactor.

It is found in the cytoplasm. It catalyses the reaction isopentenyl diphosphate + (2E,6E,10E)-geranylgeranyl diphosphate = (2E,6E,10E,14E)-geranylfarnesyl diphosphate + diphosphate. Its function is as follows. Probably involved in biosynthesis of the precursor for C25 (sesterterpanyl chain) moiety of C20-C25 diether (2-O-sesterterpanyl-3-O-phytanyl-sn-glycer) membrane lipid. Catalyzes the condensation of isopentenyl pyrophosphate with the allylic pyrophosphates to yield geranylfarnesyl diphosphate (GFPP). Geranylgeranyl diphosphate (GGPP) is the preferred substrate, but dimethylallyl diphosphate (DMAPP) and farnesyl diphosphate (FPP) can also be used as allylic substrate. In Natronomonas pharaonis (strain ATCC 35678 / DSM 2160 / CIP 103997 / JCM 8858 / NBRC 14720 / NCIMB 2260 / Gabara) (Halobacterium pharaonis), this protein is Geranylfarnesyl diphosphate synthase (idsA3).